Reading from the N-terminus, the 398-residue chain is Acetate kinase 1 (398 aa).

Residue Asn9 participates in Mg(2+) binding. Position 16 (Lys16) interacts with ATP. Arg89 provides a ligand contact to substrate. Residue Asp146 is the Proton donor/acceptor of the active site. ATP-binding positions include 206 to 210 (HLGNG), 281 to 283 (DCR), and 329 to 333 (GIGEN). Glu384 serves as a coordination point for Mg(2+).

Belongs to the acetokinase family. In terms of assembly, homodimer. Requires Mg(2+) as cofactor. Mn(2+) serves as cofactor.

The protein localises to the cytoplasm. The catalysed reaction is acetate + ATP = acetyl phosphate + ADP. Its pathway is metabolic intermediate biosynthesis; acetyl-CoA biosynthesis; acetyl-CoA from acetate: step 1/2. Functionally, catalyzes the formation of acetyl phosphate from acetate and ATP. Can also catalyze the reverse reaction. This Vibrio cholerae serotype O1 (strain ATCC 39315 / El Tor Inaba N16961) protein is Acetate kinase 1.